Reading from the N-terminus, the 513-residue chain is EGF-like domain-containing protein 1 (513 aa).

Residues 1–21 form the signal peptide; it reads MMHTFLRRLCVVALCLGYIKA. Residues 72–108 enclose the EGF-like domain; sequence PTALCGPPCLNGGECYEPTVGTYMCMCPEAFYGNKCE. 3 disulfide bridges follow: Cys-76–Cys-86, Cys-80–Cys-96, and Cys-98–Cys-107. The ZP domain occupies 115–364; it reads ECSGTEITIN…TSCDSVVCPS (250 aa). Positions 356 to 411 are disordered; it reads SCDSVVCPSPPQSVPSNPQNIPPANPQNIPPANPQNIPPANPQISPSSSQRKRRAA. Residues 375–396 are compositionally biased toward pro residues; the sequence is NIPPANPQNIPPANPQNIPPAN. Asn-438 and Asn-503 each carry an N-linked (GlcNAc...) asparagine glycan.

As to expression, component of the acid-insoluble organic matrix of calcified layers of the shell (at protein level).

The protein resides in the secreted. The sequence is that of EGF-like domain-containing protein 1 from Lottia gigantea (Giant owl limpet).